The chain runs to 491 residues: MTGLLVAGTTSDAGKTAVTTGLCRALARRGVKVAPYKAQNMSNNSMVCTSVDGAGAEIGRAQWVQALAARATPEPAMNPVLLKPGSDRRSHVVLMGRPWGQVSSSDWLEGRRALATAAHEAFDELASRYEVVVAEGAGSPTEINLRAGDYVNLGLARHAGLPTVVVGDIDRGGVFAAFFGTVALLSPQDQALIAGFVVNKFRGDVDLLAPGLRDLERLTGRRVYGTLPWHPDIWLDSEDALELAGRRSAQSGARRVAVIRLPRISNFTDVDALGLEPDLDVVFASHPGSLADADLVVLPGTRATIADLAWLRSRGLDSALRRHVAAGRPVLGICGGFQMLGRVIRDPHGVEGPVAGVDGLGLLDVETTFGPDKVLRLPSGRWFGAPATGYEIHHGRITRGDGVDEFLDGARCGQVFGTMWHGALEGDELRSRFLQEALGVAPSGVSFPAAREARLDLLGDLVERHLDVDALLDLAKTGPVAGLPFLPPGAP.

The GATase cobBQ-type domain occupies 253 to 429 (ARRVAVIRLP…WHGALEGDEL (177 aa)). Cys-334 acts as the Nucleophile in catalysis. His-421 is an active-site residue.

The protein belongs to the CobB/CobQ family. CobQ subfamily.

It participates in cofactor biosynthesis; adenosylcobalamin biosynthesis. Catalyzes amidations at positions B, D, E, and G on adenosylcobyrinic A,C-diamide. NH(2) groups are provided by glutamine, and one molecule of ATP is hydrogenolyzed for each amidation. The sequence is that of Cobyric acid synthase from Mycolicibacterium gilvum (strain PYR-GCK) (Mycobacterium gilvum (strain PYR-GCK)).